Consider the following 421-residue polypeptide: Tyrosine--tRNA ligase (421 aa).

Tyrosine 36 provides a ligand contact to L-tyrosine. The 'HIGH' region motif lies at 41–50 (PTADSLHIGH). The L-tyrosine site is built by tyrosine 170 and glutamine 174. The 'KMSKS' region motif lies at 231-235 (KFGKS). Lysine 234 contacts ATP. The region spanning 353–420 (TNIVEALIET…KKKYFMVNYQ (68 aa)) is the S4 RNA-binding domain.

It belongs to the class-I aminoacyl-tRNA synthetase family. TyrS type 1 subfamily. Homodimer.

The protein resides in the cytoplasm. The enzyme catalyses tRNA(Tyr) + L-tyrosine + ATP = L-tyrosyl-tRNA(Tyr) + AMP + diphosphate + H(+). Functionally, catalyzes the attachment of tyrosine to tRNA(Tyr) in a two-step reaction: tyrosine is first activated by ATP to form Tyr-AMP and then transferred to the acceptor end of tRNA(Tyr). The protein is Tyrosine--tRNA ligase of Staphylococcus epidermidis (strain ATCC 35984 / DSM 28319 / BCRC 17069 / CCUG 31568 / BM 3577 / RP62A).